The chain runs to 506 residues: Maturase K (506 aa).

The protein belongs to the intron maturase 2 family. MatK subfamily.

The protein resides in the plastid. It localises to the chloroplast. Functionally, usually encoded in the trnK tRNA gene intron. Probably assists in splicing its own and other chloroplast group II introns. This is Maturase K from Andromeda polifolia (Bog rosemary).